The chain runs to 428 residues: Delta-aminolevulinic acid dehydratase, chloroplastic (428 aa).

Lys-294 acts as the Schiff-base intermediate with substrate in catalysis. Positions 304 and 316 each coordinate 5-aminolevulinate. Glu-332 lines the Mg(2+) pocket. Lys-347 functions as the Schiff-base intermediate with substrate in the catalytic mechanism. Positions 373 and 412 each coordinate 5-aminolevulinate.

Belongs to the ALAD family. As to quaternary structure, homooctamer. The cofactor is Mg(2+).

The protein resides in the plastid. It localises to the chloroplast. The enzyme catalyses 2 5-aminolevulinate = porphobilinogen + 2 H2O + H(+). It functions in the pathway porphyrin-containing compound metabolism; protoporphyrin-IX biosynthesis; coproporphyrinogen-III from 5-aminolevulinate: step 1/4. Its function is as follows. Catalyzes an early step in the biosynthesis of tetrapyrroles. Binds two molecules of 5-aminolevulinate per subunit, each at a distinct site, and catalyzes their condensation to form porphobilinogen. This is Delta-aminolevulinic acid dehydratase, chloroplastic (HEMB) from Hordeum vulgare (Barley).